A 243-amino-acid chain; its full sequence is Ubiquinone/menaquinone biosynthesis C-methyltransferase UbiE (243 aa).

S-adenosyl-L-methionine contacts are provided by residues Thr-69, Asp-90, and 116-117 (DA).

It belongs to the class I-like SAM-binding methyltransferase superfamily. MenG/UbiE family.

It catalyses the reaction a 2-demethylmenaquinol + S-adenosyl-L-methionine = a menaquinol + S-adenosyl-L-homocysteine + H(+). The catalysed reaction is a 2-methoxy-6-(all-trans-polyprenyl)benzene-1,4-diol + S-adenosyl-L-methionine = a 5-methoxy-2-methyl-3-(all-trans-polyprenyl)benzene-1,4-diol + S-adenosyl-L-homocysteine + H(+). It functions in the pathway quinol/quinone metabolism; menaquinone biosynthesis; menaquinol from 1,4-dihydroxy-2-naphthoate: step 2/2. It participates in cofactor biosynthesis; ubiquinone biosynthesis. In terms of biological role, methyltransferase required for the conversion of demethylmenaquinol (DMKH2) to menaquinol (MKH2) and the conversion of 2-polyprenyl-6-methoxy-1,4-benzoquinol (DDMQH2) to 2-polyprenyl-3-methyl-6-methoxy-1,4-benzoquinol (DMQH2). The chain is Ubiquinone/menaquinone biosynthesis C-methyltransferase UbiE from Burkholderia cenocepacia (strain HI2424).